Consider the following 482-residue polypeptide: Probable cytosol aminopeptidase (482 aa).

Mn(2+)-binding residues include lysine 251 and aspartate 256. Residue lysine 263 is part of the active site. Mn(2+) is bound by residues aspartate 274, aspartate 333, and glutamate 335. Arginine 337 is a catalytic residue.

The protein belongs to the peptidase M17 family. Requires Mn(2+) as cofactor.

It localises to the cytoplasm. It carries out the reaction Release of an N-terminal amino acid, Xaa-|-Yaa-, in which Xaa is preferably Leu, but may be other amino acids including Pro although not Arg or Lys, and Yaa may be Pro. Amino acid amides and methyl esters are also readily hydrolyzed, but rates on arylamides are exceedingly low.. The enzyme catalyses Release of an N-terminal amino acid, preferentially leucine, but not glutamic or aspartic acids.. Presumably involved in the processing and regular turnover of intracellular proteins. Catalyzes the removal of unsubstituted N-terminal amino acids from various peptides. This Acinetobacter baylyi (strain ATCC 33305 / BD413 / ADP1) protein is Probable cytosol aminopeptidase.